The primary structure comprises 537 residues: MAAAAAELVIGWCIFGLLLLAILAFCWVYVRKYQSQRESEVVSTVTAIFSLAVALITSALLPVDIFLVSYMKNQNGTFKDWADANVTVQIENTVLYGYYTLYSVILFCVFFWIPFVYFYYEEKDEDDASKCTQIKTALKYTLGFVVICALLLLVGAFVPLHLPNNNNSTEWEKVKLLFEDLGTGQGLAALSFSISSLTLIGMLAAITYTAYGMSALPLNLIKGTRSTAYERLENTEDIEEVEQHIQTIRSKSKDGRPLPARDRRALKQCEERLRTLRKRERHLEFIENSWWTKFCGALRPLKIIWGIFFILVALLFVISLFLSNLDKALHSAGIDSGFIIFGTNLSNPLNMLLPLLQTVFPLDYILITIIIMYFIFTSMAGIRNIGIWFFWIRLYKIRRGRTRPQALLFLCMILLLIVLHTSYMIYSLAPQYVMYGSQNYLIESNITSDAHKGNSTLAVPKRCDADAPKDQCTVTRTYIFLHKFWFFSAAYYFGNWAFLVVFLIGLIVSCCKGKKSVIEGVDEDSDLSDDEPSAYSA.

Residues 1–7 are Extracellular-facing; that stretch reads MAAAAAE. A helical membrane pass occupies residues 8-28; that stretch reads LVIGWCIFGLLLLAILAFCWV. Residues 29–47 lie on the Cytoplasmic side of the membrane; it reads YVRKYQSQRESEVVSTVTA. Residues 48 to 68 traverse the membrane as a helical segment; sequence IFSLAVALITSALLPVDIFLV. Residues 69–97 lie on the Extracellular side of the membrane; that stretch reads SYMKNQNGTFKDWADANVTVQIENTVLYG. Residues asparagine 75 and asparagine 85 are each glycosylated (N-linked (GlcNAc...) asparagine). The chain crosses the membrane as a helical span at residues 98-118; that stretch reads YYTLYSVILFCVFFWIPFVYF. Residues 119 to 141 are Cytoplasmic-facing; sequence YYEEKDEDDASKCTQIKTALKYT. The chain crosses the membrane as a helical span at residues 142 to 162; that stretch reads LGFVVICALLLLVGAFVPLHL. Topologically, residues 163 to 185 are extracellular; it reads PNNNNSTEWEKVKLLFEDLGTGQ. N-linked (GlcNAc...) asparagine glycosylation is found at asparagine 166 and asparagine 167. The chain crosses the membrane as a helical span at residues 186–206; it reads GLAALSFSISSLTLIGMLAAI. The Cytoplasmic portion of the chain corresponds to 207 to 302; sequence TYTAYGMSAL…KFCGALRPLK (96 aa). Residues 229 to 232 carry the YERL motif; mediates interaction with adapter protein complex 2 and is essential for its function in clathrin-mediated endocytosis of INSR motif; it reads YERL. At threonine 235 the chain carries Phosphothreonine. Positions 291–294 match the WTKF motif; mediates interaction with adapter protein complex 2 and is essential for its function in clathrin-mediated endocytosis of INSR motif; sequence WTKF. A helical membrane pass occupies residues 303–323; it reads IIWGIFFILVALLFVISLFLS. Residues 324 to 361 lie on the Extracellular side of the membrane; that stretch reads NLDKALHSAGIDSGFIIFGTNLSNPLNMLLPLLQTVFP. N-linked (GlcNAc...) asparagine glycosylation occurs at asparagine 344. Residues 362-382 traverse the membrane as a helical segment; sequence LDYILITIIIMYFIFTSMAGI. The Cytoplasmic portion of the chain corresponds to 383–405; that stretch reads RNIGIWFFWIRLYKIRRGRTRPQ. Residues 406 to 426 traverse the membrane as a helical segment; that stretch reads ALLFLCMILLLIVLHTSYMIY. The Extracellular segment spans residues 427–483; the sequence is SLAPQYVMYGSQNYLIESNITSDAHKGNSTLAVPKRCDADAPKDQCTVTRTYIFLHK. Residues asparagine 445 and asparagine 454 are each glycosylated (N-linked (GlcNAc...) asparagine). A helical transmembrane segment spans residues 484–504; it reads FWFFSAAYYFGNWAFLVVFLI. At 505-537 the chain is on the cytoplasmic side; sequence GLIVSCCKGKKSVIEGVDEDSDLSDDEPSAYSA. 2 positions are modified to phosphoserine: serine 525 and serine 528.

It belongs to the LIMR family. LMBRD1 subfamily. As to quaternary structure, interacts with ABCD4; this interaction induces the translocation of ABCD4 from the endoplasmic reticulum to the lysosome. Interacts with ABCD4 and MMACHC; this interaction ensures the transport of cobalamin from the lysosome to the cytoplasm. Interacts with INSR, adapter protein complex 2 and clathrin heavy chain. N-glycosylated.

It is found in the endoplasmic reticulum membrane. Its subcellular location is the lysosome membrane. It localises to the cell membrane. The protein resides in the cytoplasmic vesicle. The protein localises to the clathrin-coated vesicle. Its function is as follows. Lysosomal membrane chaperone required to export cobalamin (vitamin B12) from the lysosome to the cytosol, allowing its conversion to cofactors. Targets ABCD4 transporter from the endoplasmic reticulum to the lysosome. Then forms a complex with lysosomal ABCD4 and cytoplasmic MMACHC to transport cobalamin across the lysosomal membrane. Acts as an adapter protein which plays an important role in mediating and regulating the internalization of the insulin receptor (INSR). Involved in clathrin-mediated endocytosis of INSR via its interaction with adapter protein complex 2. Essential for the initiation of gastrulation and early formation of mesoderm structures during embryogenesis. The sequence is that of Lysosomal cobalamin transport escort protein LMBD1 from Mus musculus (Mouse).